A 387-amino-acid polypeptide reads, in one-letter code: MGILGLSKLIADLAPQAIRESEIKNFFGRKVAIDASMCLYQFLIAVRSEGAQLATVNGDPTSHLMGMFYRTIRLLDNGIKPVYVFDGKPPDLKSGELAKRAERREEAEKALKAATDAGDDAGIEKFNRRLVRVTKEHANEAKELLTLMGVPYVDAPCEAEAQCAALVKAGKVYATATEDMDALTFGSTKLLRYLTYSEARKMPVKEFSYEKLLEGLSINSREFIDLCILLGCDYCESIKGIGPKRAIELINNYRDIETILDNLDSSKYTVPENWNYKVARELFIEPEVANADNIDLKWVEPDEEGLVKFLCGDRQFSEERVRNGAKKLMKSKQAQTQVRLDSFFKTLPSTPNATNAAKRKAEEAKKSANNKKAKTSGGGGGRGRRPK.

Residues 1-104 form an N-domain region; that stretch reads MGILGLSKLI…GELAKRAERR (104 aa). Asp-34 contacts Mg(2+). DNA-binding residues include Arg-47 and Arg-70. Mg(2+)-binding residues include Asp-86, Glu-158, Glu-160, Asp-179, and Asp-181. An I-domain region spans residues 122–253; that stretch reads GIEKFNRRLV…KRAIELINNY (132 aa). DNA is bound at residue Glu-158. DNA contacts are provided by Gly-231 and Asp-233. Residue Asp-233 participates in Mg(2+) binding. Positions 336-344 are interaction with PCNA; that stretch reads TQVRLDSFF. The interval 345–387 is disordered; sequence KTLPSTPNATNAAKRKAEEAKKSANNKKAKTSGGGGGRGRRPK.

It belongs to the XPG/RAD2 endonuclease family. FEN1 subfamily. In terms of assembly, interacts with PCNA. Three molecules of FEN1 bind to one PCNA trimer with each molecule binding to one PCNA monomer. PCNA stimulates the nuclease activity without altering cleavage specificity. It depends on Mg(2+) as a cofactor. In terms of processing, phosphorylated. Phosphorylation upon DNA damage induces relocalization to the nuclear plasma.

Its subcellular location is the nucleus. The protein resides in the nucleolus. It localises to the nucleoplasm. The protein localises to the mitochondrion. In terms of biological role, structure-specific nuclease with 5'-flap endonuclease and 5'-3' exonuclease activities involved in DNA replication and repair. During DNA replication, cleaves the 5'-overhanging flap structure that is generated by displacement synthesis when DNA polymerase encounters the 5'-end of a downstream Okazaki fragment. It enters the flap from the 5'-end and then tracks to cleave the flap base, leaving a nick for ligation. Also involved in the long patch base excision repair (LP-BER) pathway, by cleaving within the apurinic/apyrimidinic (AP) site-terminated flap. Acts as a genome stabilization factor that prevents flaps from equilibrating into structures that lead to duplications and deletions. Also possesses 5'-3' exonuclease activity on nicked or gapped double-stranded DNA, and exhibits RNase H activity. Also involved in replication and repair of rDNA and in repairing mitochondrial DNA. This is Flap endonuclease 1 from Drosophila yakuba (Fruit fly).